The sequence spans 579 residues: Mitogen-activated protein kinase kinase kinase 7 (579 aa).

The interaction with MAPK8IP1 stretch occupies residues M1–Y300. A Protein kinase domain is found at I36–F291. ATP contacts are provided by residues V42–V50 and K63. K72 participates in a covalent cross-link: Glycyl lysine isopeptide (Lys-Gly) (interchain with G-Cter in ubiquitin). D156 (proton acceptor) is an active-site residue. K158 participates in a covalent cross-link: Glycyl lysine isopeptide (Lys-Gly) (interchain with G-Cter in ubiquitin). Phosphothreonine; by autocatalysis is present on residues T184 and T187. Residue S192 is modified to Phosphoserine; by autocatalysis. A Glycyl lysine isopeptide (Lys-Gly) (interchain with G-Cter in ubiquitin) cross-link involves residue K209. Disordered regions lie at residues P301–V338 and K354–D391. Residues D306–V338 show a composition bias toward polar residues. Positions S361 to S375 are enriched in low complexity. Residues S367, S389, and S412 each carry the phosphoserine modification. Over residues L416–Q425 the composition is skewed to polar residues. Residues L416–D466 form a disordered region. Residues V426–R436 are compositionally biased toward low complexity. S428 is modified (phosphoserine).

Belongs to the protein kinase superfamily. STE Ser/Thr protein kinase family. MAP kinase kinase kinase subfamily. In terms of assembly, can form homodimer. Binds both upstream activators and downstream substrates in multimolecular complexes. Interacts with TAB1/MAP3K7IP1, TAB2/MAP3K7IP2 and TAB3/MAP3K7IP3. Identified in the TRIKA2 complex composed of MAP3K7/TAK1, TAB1/MAP3K7IP1 and TAB2/MAP3K7IP2. Interacts with PPM1L and PPM1B/PP2CB. Interaction with PP2A and PPP6C leads to its repressed activity. Interacts with TRAF6 and TAB1/MAP3K7IP1; during IL-1 signaling. Interacts with TAOK1 and TAOK2; interaction with TAOK2 interferes with MAP3K7 interaction with IKKA, thus preventing NF-kappa-B activation. Interacts with DYNC2I2 (via WD domains). Interacts with CYLD and RBCK1. Interacts with TGFBR1; induces MAP3K7/TAK1 activation by TRAF6. Interacts with MAPK8IP1 and SMAD6. Interacts with isoform 1 of VRK2. Interacts with DAB2; the interaction is induced by TGF-beta stimulation and may mediate TGF-beta stimulated JNK activation. Interacts with TRIM5. Part of a complex containing ITCH, NDFIP1 and MAP3K7. Interacts with PLEKHM1 (via N- and C-terminus). Interacts with TRIM8. Found in a complex with SH3RF1, RAC2, MAP2K7/MKK7, MAPK8IP1/JIP1, MAPK8/JNK1 and MAPK9/JNK2. Interacts with SASH1. Interacts with RIPK1. Mg(2+) is required as a cofactor. Post-translationally, association with TAB1/MAP3K7IP1 promotes autophosphorylation and subsequent activation. Association with TAB2/MAP3K7IP2, itself associated with free unanchored Lys-63 polyubiquitin chain, promotes autophosphorylation and subsequent activation of MAP3K7. Dephosphorylation at Thr-187 by PP2A and PPP6C leads to inactivation. 'Lys-48'-linked polyubiquitination at Lys-72 is induced by TNFalpha, and leads to proteasomal degradation. Undergoes 'Lys-48'-linked polyubiquitination catalyzed by ITCH. 'Lys-63'-linked polyubiquitination at Lys-158 by TRIM8 does not lead to proteasomal degradation but contributes to autophosphorylation and activation. Deubiquitinated by CYLD, a protease that selectively cleaves 'Lys-63'-linked ubiquitin chains.Deubiquitinated by USP19; leading to negative regulation of TNF-alpha- and IL-1beta-triggered NF-kappa-B activation.

Its subcellular location is the cytoplasm. It is found in the cell membrane. It catalyses the reaction L-seryl-[protein] + ATP = O-phospho-L-seryl-[protein] + ADP + H(+). The catalysed reaction is L-threonyl-[protein] + ATP = O-phospho-L-threonyl-[protein] + ADP + H(+). Its activity is regulated as follows. Activated by pro-inflammatory cytokines and in response to physical and chemical stresses, including osmotic stress, oxidative stress, arsenic and ultraviolet light irradiation. Activated by 'Lys-63'-linked polyubiquitination and by autophosphorylation. Association with TAB1/MAP3K7IP1 and TAB2/MAP3K7IP2 promotes activation through autophosphorylation, whereas PPM1B/PP2CB, PP2A and PPP6C dephosphorylation leads to inactivation. Ceramides are also able to activate MAP3K7/TAK1. Its function is as follows. Serine/threonine kinase which acts as an essential component of the MAP kinase signal transduction pathway. Plays an important role in the cascades of cellular responses evoked by changes in the environment. Mediates signal transduction of TRAF6, various cytokines including interleukin-1 (IL-1), transforming growth factor-beta (TGFB), TGFB-related factors like BMP2 and BMP4, toll-like receptors (TLR), tumor necrosis factor receptor CD40 and B-cell receptor (BCR). Once activated, acts as an upstream activator of the MKK/JNK signal transduction cascade and the p38 MAPK signal transduction cascade through the phosphorylation and activation of several MAP kinase kinases like MAP2K1/MEK1, MAP2K3/MKK3, MAP2K6/MKK6 and MAP2K7/MKK7. These MAP2Ks in turn activate p38 MAPKs and c-jun N-terminal kinases (JNKs); both p38 MAPK and JNK pathways control the transcription factors activator protein-1 (AP-1). Independently of MAP2Ks and p38 MAPKs, acts as a key activator of NF-kappa-B by promoting activation of the I-kappa-B-kinase (IKK) core complex. Mechanistically, recruited to polyubiquitin chains of RIPK2 and IKBKG/NEMO via TAB2/MAP3K7IP2 and TAB3/MAP3K7IP3, and catalyzes phosphorylation and activation of IKBKB/IKKB component of the IKK complex, leading to NF-kappa-B activation. In osmotic stress signaling, plays a major role in the activation of MAPK8/JNK1, but not that of NF-kappa-B. Promotes TRIM5 capsid-specific restriction activity. Phosphorylates RIPK1 at 'Ser-321' which positively regulates RIPK1 interaction with RIPK3 to promote necroptosis but negatively regulates RIPK1 kinase activity and its interaction with FADD to mediate apoptosis. Phosphorylates STING1 in response to cGAMP-activation, promoting association between STEEP1 and STING1 and STING1 translocation to COPII vesicles. This is Mitogen-activated protein kinase kinase kinase 7 (Map3k7) from Mus musculus (Mouse).